We begin with the raw amino-acid sequence, 423 residues long: Glutamate-1-semialdehyde 2,1-aminomutase (423 aa).

K262 is modified (N6-(pyridoxal phosphate)lysine).

It belongs to the class-III pyridoxal-phosphate-dependent aminotransferase family. HemL subfamily. Pyridoxal 5'-phosphate is required as a cofactor.

It localises to the cytoplasm. It carries out the reaction (S)-4-amino-5-oxopentanoate = 5-aminolevulinate. The protein operates within porphyrin-containing compound metabolism; protoporphyrin-IX biosynthesis; 5-aminolevulinate from L-glutamyl-tRNA(Glu): step 2/2. This is Glutamate-1-semialdehyde 2,1-aminomutase from Methanosphaera stadtmanae (strain ATCC 43021 / DSM 3091 / JCM 11832 / MCB-3).